Here is a 335-residue protein sequence, read N- to C-terminus: Nucleoid-associated protein YejK (335 aa).

Belongs to the YejK family.

It is found in the cytoplasm. It localises to the nucleoid. The protein is Nucleoid-associated protein YejK of Shigella dysenteriae serotype 1 (strain Sd197).